The primary structure comprises 66 residues: Alpha-like toxin BeM9 (66 aa).

An LCN-type CS-alpha/beta domain is found at 2-66; sequence RDAYIAKPHN…VPIRIPGKCH (65 aa). 4 disulfides stabilise this stretch: Cys-12–Cys-65, Cys-16–Cys-38, Cys-24–Cys-48, and Cys-28–Cys-50.

This sequence belongs to the long (4 C-C) scorpion toxin superfamily. Sodium channel inhibitor family. Alpha subfamily. As to expression, expressed by the venom gland.

It is found in the secreted. Alpha toxins bind voltage-independently at site-3 of sodium channels (Nav) and inhibit the inactivation of the activated channels, thereby blocking neuronal transmission. This toxin is active on both mammals and insects, since it inhibits inactivation of rNav1.4/SCN4A, hNav1.5/SCN5A, mNav1.6/SCN8A and insect BgNav1 and DmNav1 channels. In vivo, it shows paralytic activity in mice. This Mesobuthus eupeus (Lesser Asian scorpion) protein is Alpha-like toxin BeM9.